The primary structure comprises 620 residues: Ion-translocating oxidoreductase complex subunit C (620 aa).

4Fe-4S ferredoxin-type domains are found at residues 366–397 and 407–436; these read TEMGLSEPEQSCIRCGLCVDACPAGLLPQQLY and KARNHNLFDCIECGACAYVCPSNIPLVQYY. Cys-377, Cys-380, Cys-383, Cys-387, Cys-416, Cys-419, Cys-422, and Cys-426 together coordinate [4Fe-4S] cluster.

Belongs to the 4Fe4S bacterial-type ferredoxin family. RnfC subfamily. In terms of assembly, the complex is composed of six subunits: RnfA, RnfB, RnfC, RnfD, RnfE and RnfG. It depends on [4Fe-4S] cluster as a cofactor.

It localises to the cell inner membrane. Functionally, part of a membrane-bound complex that couples electron transfer with translocation of ions across the membrane. The chain is Ion-translocating oxidoreductase complex subunit C from Yersinia pestis bv. Antiqua (strain Antiqua).